A 530-amino-acid chain; its full sequence is Type 2 DNA topoisomerase 6 subunit B (530 aa).

ATP is bound by residues Asn42, Asp76, 97 to 98 (SK), 106 to 113 (GMYGLGVK), and Lys427.

It belongs to the TOP6B family. In terms of assembly, homodimer. Heterotetramer of two Top6A and two Top6B chains.

It catalyses the reaction ATP-dependent breakage, passage and rejoining of double-stranded DNA.. Relaxes both positive and negative superturns and exhibits a strong decatenase activity. The protein is Type 2 DNA topoisomerase 6 subunit B of Saccharolobus solfataricus (strain ATCC 35092 / DSM 1617 / JCM 11322 / P2) (Sulfolobus solfataricus).